Consider the following 3108-residue polypeptide: Probable polyketide synthase 39 (3108 aa).

The Ketosynthase family 3 (KS3) domain occupies 9-440; it reads DDDVAVIGIG…GSNVCLILSE (432 aa). Catalysis depends on for beta-ketoacyl synthase activity residues C181, H320, and H363. Positions 643–676 are acyl/malonyl transferase; it reads GVSADIIIGHSLGEISSAYCSGMIDFQTLCYLTY. S653 functions as the For acyl/malonyl transferase activity in the catalytic mechanism. The interval 939-1068 is N-terminal hotdog fold; the sequence is HEKIKSEGPS…GNFSLFKHNI (130 aa). In terms of domain architecture, PKS/mFAS DH spans 939–1265; that stretch reads HEKIKSEGPS…CTIAASNPDS (327 aa). H980 functions as the Proton acceptor; for dehydratase activity in the catalytic mechanism. The C-terminal hotdog fold stretch occupies residues 1085 to 1265; sequence NFTSISKQDL…CTIAASNPDS (181 aa). D1157 serves as the catalytic Proton donor; for dehydratase activity. The disordered stretch occupies residues 1375–1435; sequence NNNNNNNNNN…NNNNNNNNNN (61 aa). Residues 2566–2643 form the Carrier domain; sequence GNNEIIHSTI…QSIEIIKSAL (78 aa). The residue at position 2603 (S2603) is an O-(pantetheine 4'-phosphoryl)serine. Residues 2702–2722 form a helical membrane-spanning segment; the sequence is IFLTGSTGFLGAYLLMELIKM.

Pantetheine 4'-phosphate serves as cofactor.

It localises to the membrane. In terms of biological role, probable polyketide synthase. The polypeptide is Probable polyketide synthase 39 (pks39) (Dictyostelium discoideum (Social amoeba)).